A 145-amino-acid chain; its full sequence is MKGLLQRVRSARVEVGTEVVGAIDQGILVLVGIEPQDTRASADKLLHKLLNYRVFSDADGKMNLSLREVSGGLLLVSQFTLAADTKSGLRAGFSKAAAPALGAELFDYLLSQARIAHPVVAAGQFGADMQVHLINDGPVTFLFET.

Residues 137 to 138 (GP) carry the Gly-cisPro motif, important for rejection of L-amino acids motif.

The protein belongs to the DTD family. In terms of assembly, homodimer.

It is found in the cytoplasm. It catalyses the reaction glycyl-tRNA(Ala) + H2O = tRNA(Ala) + glycine + H(+). The enzyme catalyses a D-aminoacyl-tRNA + H2O = a tRNA + a D-alpha-amino acid + H(+). Functionally, an aminoacyl-tRNA editing enzyme that deacylates mischarged D-aminoacyl-tRNAs. Also deacylates mischarged glycyl-tRNA(Ala), protecting cells against glycine mischarging by AlaRS. Acts via tRNA-based rather than protein-based catalysis; rejects L-amino acids rather than detecting D-amino acids in the active site. By recycling D-aminoacyl-tRNA to D-amino acids and free tRNA molecules, this enzyme counteracts the toxicity associated with the formation of D-aminoacyl-tRNA entities in vivo and helps enforce protein L-homochirality. The polypeptide is D-aminoacyl-tRNA deacylase (Pseudomonas syringae pv. tomato (strain ATCC BAA-871 / DC3000)).